The sequence spans 345 residues: Adenine deaminase (345 aa).

Histidine 24, histidine 26, and histidine 204 together coordinate Zn(2+). Catalysis depends on glutamate 207, which acts as the Proton donor. Residue aspartate 285 coordinates Zn(2+). Residue aspartate 286 participates in substrate binding.

The protein belongs to the metallo-dependent hydrolases superfamily. Adenosine and AMP deaminases family. Adenine deaminase type 2 subfamily. It depends on Zn(2+) as a cofactor.

It catalyses the reaction adenine + H2O + H(+) = hypoxanthine + NH4(+). Its function is as follows. Catalyzes the hydrolytic deamination of adenine to hypoxanthine. Plays an important role in the purine salvage pathway and in nitrogen catabolism. The chain is Adenine deaminase from Albidiferax ferrireducens (strain ATCC BAA-621 / DSM 15236 / T118) (Rhodoferax ferrireducens).